The following is a 229-amino-acid chain: Protein AF_2251 (229 aa).

It belongs to the CinA family.

The protein is Protein AF_2251 of Archaeoglobus fulgidus (strain ATCC 49558 / DSM 4304 / JCM 9628 / NBRC 100126 / VC-16).